The sequence spans 254 residues: Probable protein S-acyltransferase 15 (254 aa).

A run of 2 helical transmembrane segments spans residues 1 to 21 and 28 to 48; these read MGFVYYVTLFVFIDDWVGLQS and ALLFSLLASLCLFSLSICVLV. The region spanning 75 to 125 is the DHHC domain; the sequence is RKCDKCFAYKPLRTHHCRVCRRCVLKMDHHCLWINNCVGYANYKAFFILVF. Catalysis depends on Cys105, which acts as the S-palmitoyl cysteine intermediate. The next 2 membrane-spanning stretches (helical) occupy residues 119–139 and 164–184; these read AFFILVFYATVASIYSTVLLV and IFMIGLSITLGTLLCWHIYLI.

It belongs to the DHHC palmitoyltransferase family.

The protein resides in the endoplasmic reticulum membrane. The protein localises to the cytoplasmic vesicle membrane. It carries out the reaction L-cysteinyl-[protein] + hexadecanoyl-CoA = S-hexadecanoyl-L-cysteinyl-[protein] + CoA. In terms of biological role, palmitoyl acyltransferase. In Arabidopsis thaliana (Mouse-ear cress), this protein is Probable protein S-acyltransferase 15 (PAT15).